We begin with the raw amino-acid sequence, 421 residues long: Synaptotagmin-1 (421 aa).

Residues 1-57 (MVSASHPEALAAPVTTVATLVPHNATEPASPGEGKEDAFSKLKQKFMNELHKIPLPP) are Vesicular-facing. The N-linked (GlcNAc...) asparagine glycan is linked to Asn24. Residues 58–79 (WALIAIAIVAVLLVVTCCFCVC) form a helical membrane-spanning segment. Residues Cys74, Cys75, Cys77, Cys79, and Cys82 are each lipidated (S-palmitoyl cysteine). Over 80 to 421 (KKCLFKKKNK…EVDAMLAVKK (342 aa)) the chain is Cytoplasmic. A disordered region spans residues 112–141 (TMKDQALKDDDAETGLTDGEEKEEPKEEEK). Residues 121–133 (DDAETGLTDGEEK) are compositionally biased toward acidic residues. The residue at position 128 (Thr128) is a Phosphothreonine. The segment at 135–381 (EPKEEEKLGK…AIGKVFVGYN (247 aa)) is phospholipid binding. The region spanning 141 to 260 (KLGKLQYSLD…DFGHVTEEWR (120 aa)) is the C2 1 domain. Leu171, Asp172, and Asp178 together coordinate Ca(2+). Tyr229 carries the post-translational modification Phosphotyrosine. Positions 230, 231, 232, 235, 236, and 238 each coordinate Ca(2+). A Phosphoserine modification is found at Ser264. Positions 272–405 (KLGDICFSLR…NPRRPIAQWH (134 aa)) constitute a C2 2 domain. Ca(2+) contacts are provided by Asp303 and Asp309. A phosphoserine mark is found at Ser342 and Ser344. 3 residues coordinate Ca(2+): Asp363, Asp365, and Asp371.

Belongs to the synaptotagmin family. In terms of assembly, homotetramer. Heterodimer; heterodimerizes with SYT2 in presence of calcium. Interacts with SCAMP5. Interacts with STON2. Forms a complex with SV2B, syntaxin 1 and SNAP25. Interacts with SV2A, SV2B and SV2C. Interacts with RIMS1. Interacts with PRRT2. Interacts with DNAJC5 in a phosphorylation-dependent manner. Interacts (via N-terminus) with RAB3A. Interacts with SYT12. Interacts with calmodulin. Interacts with DNM1 (via C-terminal proline-rich domain (PRD)); this interaction facilitates vesicle fission during clathrin-mediated endocytosis (CME). As to quaternary structure, (Microbial infection) Interacts with C.botulinum neurotoxin type B (BoNT/B, botB). Has lower affinity for BoNT/B than Syt2; mutating its residues to match those in Syt2 increases its affinity. (Microbial infection) Interacts with C.botulinum neurotoxin type G (BoNT/G, botG). It depends on Ca(2+) as a cofactor. Post-translationally, glycosylated. In terms of tissue distribution, expressed in the brain (at protein level). Predominantly expressed in rostral, phylogenetically younger brain regions, and in some endocrine tissues.

Its subcellular location is the cytoplasmic vesicle. The protein resides in the secretory vesicle membrane. The protein localises to the secretory vesicle. It localises to the synaptic vesicle membrane. It is found in the chromaffin granule membrane. Its subcellular location is the cytoplasm. In terms of biological role, calcium sensor that participates in triggering neurotransmitter release at the synapse. May have a regulatory role in the membrane interactions during trafficking of synaptic vesicles at the active zone of the synapse. It binds acidic phospholipids with a specificity that requires the presence of both an acidic head group and a diacyl backbone. A Ca(2+)-dependent interaction between synaptotagmin and putative receptors for activated protein kinase C has also been reported. It can bind to at least three additional proteins in a Ca(2+)-independent manner; these are neurexins, syntaxin and AP2. Plays a role in dendrite formation by melanocytes. Its function is as follows. (Microbial infection) Receptor for C.botulinum neurotoxin type B (BoNT/B, botB); interaction is improved in the presence of gangliosides. BoNT/B toxin binds to the membrane proximal vesicular domain of Syt1 (residues 32-51). (Microbial infection) Receptor for C.botulinum neurotoxin type G (BoNT/G, botG); unlike the case with BoNT/B, interaction is not improved in the presence of gangliosides. BoNT/G toxin binds to the vesicular domain of Syt1 (residues 32-53). This is Synaptotagmin-1 from Rattus norvegicus (Rat).